Consider the following 149-residue polypeptide: Large ribosomal subunit protein uL22c (149 aa).

Belongs to the universal ribosomal protein uL22 family. In terms of assembly, part of the 50S ribosomal subunit.

It is found in the plastid. The protein resides in the chloroplast. Functionally, this protein binds specifically to 23S rRNA. The globular domain of the protein is located near the polypeptide exit tunnel on the outside of the subunit, while an extended beta-hairpin is found that lines the wall of the exit tunnel in the center of the 70S ribosome. The polypeptide is Large ribosomal subunit protein uL22c (rpl22) (Oryza nivara (Indian wild rice)).